Reading from the N-terminus, the 254-residue chain is uncharacterized protein (254 aa).

Helical transmembrane passes span 41–61, 64–84, 91–111, 125–145, 146–166, 172–192, 204–224, and 232–252; these read VFVF…IKII, IFQA…EYFF, IYCG…LYIL, ILIG…FVLA, PAAL…LWSF, FILL…IQLL, MLLA…VLTP, and IIMS…LFLL.

This sequence belongs to the TatC family.

Its subcellular location is the plastid. It is found in the chloroplast membrane. This is an uncharacterized protein from Porphyra purpurea (Red seaweed).